Here is a 201-residue protein sequence, read N- to C-terminus: Large ribosomal subunit protein uL4 (201 aa).

The segment at 44 to 68 is disordered; sequence RAQKSRADVSGSGRKPWRQKGTGRA.

Belongs to the universal ribosomal protein uL4 family. As to quaternary structure, part of the 50S ribosomal subunit.

Functionally, one of the primary rRNA binding proteins, this protein initially binds near the 5'-end of the 23S rRNA. It is important during the early stages of 50S assembly. It makes multiple contacts with different domains of the 23S rRNA in the assembled 50S subunit and ribosome. In terms of biological role, forms part of the polypeptide exit tunnel. This Buchnera aphidicola subsp. Schizaphis graminum (strain Sg) protein is Large ribosomal subunit protein uL4.